A 362-amino-acid chain; its full sequence is Probable aromatic amino acid hydroxylase (362 aa).

His200 and His205 together coordinate Fe cation.

It belongs to the biopterin-dependent aromatic amino acid hydroxylase family. Requires Fe(2+) as cofactor.

This Chlamydia pneumoniae (Chlamydophila pneumoniae) protein is Probable aromatic amino acid hydroxylase.